Reading from the N-terminus, the 364-residue chain is Alanine racemase (364 aa).

Catalysis depends on Lys39, which acts as the Proton acceptor; specific for D-alanine. Lys39 is modified (N6-(pyridoxal phosphate)lysine). Arg137 contributes to the substrate binding site. The active-site Proton acceptor; specific for L-alanine is the Tyr258. Met306 is a substrate binding site.

Belongs to the alanine racemase family. It depends on pyridoxal 5'-phosphate as a cofactor.

It catalyses the reaction L-alanine = D-alanine. It functions in the pathway amino-acid biosynthesis; D-alanine biosynthesis; D-alanine from L-alanine: step 1/1. Functionally, catalyzes the interconversion of L-alanine and D-alanine. May also act on other amino acids. This chain is Alanine racemase (alr), found in Methylobacterium sp. (strain 4-46).